Reading from the N-terminus, the 208-residue chain is N-(5'-phosphoribosyl)anthranilate isomerase (208 aa).

It belongs to the TrpF family.

The enzyme catalyses N-(5-phospho-beta-D-ribosyl)anthranilate = 1-(2-carboxyphenylamino)-1-deoxy-D-ribulose 5-phosphate. It participates in amino-acid biosynthesis; L-tryptophan biosynthesis; L-tryptophan from chorismate: step 3/5. In Desulforamulus reducens (strain ATCC BAA-1160 / DSM 100696 / MI-1) (Desulfotomaculum reducens), this protein is N-(5'-phosphoribosyl)anthranilate isomerase.